Consider the following 188-residue polypeptide: Glutathione S-transferase 2 (188 aa).

Residues 2-79 (VHYKLMCFDV…FLARQYGYSG (78 aa)) form the GST N-terminal domain. Glutathione is bound by residues K43, 49–51 (GQL), and 63–64 (QS). The GST C-terminal domain occupies 81-188 (TPTEEMQVDS…PHLNVFIRKL (108 aa)).

The protein belongs to the GST superfamily. Sigma family.

It catalyses the reaction RX + glutathione = an S-substituted glutathione + a halide anion + H(+). Conjugation of reduced glutathione to a wide number of exogenous and endogenous hydrophobic electrophiles. In Caenorhabditis elegans, this protein is Glutathione S-transferase 2 (gst-2).